The following is a 619-amino-acid chain: 1-deoxy-D-xylulose-5-phosphate synthase (619 aa).

Residues His-80 and 121 to 123 (GHS) contribute to the thiamine diphosphate site. A Mg(2+)-binding site is contributed by Asp-152. Residues 153 to 154 (GA), Asn-181, Tyr-288, and Glu-370 contribute to the thiamine diphosphate site. Residue Asn-181 coordinates Mg(2+).

The protein belongs to the transketolase family. DXPS subfamily. Homodimer. Requires Mg(2+) as cofactor. Thiamine diphosphate serves as cofactor.

The catalysed reaction is D-glyceraldehyde 3-phosphate + pyruvate + H(+) = 1-deoxy-D-xylulose 5-phosphate + CO2. Its pathway is metabolic intermediate biosynthesis; 1-deoxy-D-xylulose 5-phosphate biosynthesis; 1-deoxy-D-xylulose 5-phosphate from D-glyceraldehyde 3-phosphate and pyruvate: step 1/1. Catalyzes the acyloin condensation reaction between C atoms 2 and 3 of pyruvate and glyceraldehyde 3-phosphate to yield 1-deoxy-D-xylulose-5-phosphate (DXP). The polypeptide is 1-deoxy-D-xylulose-5-phosphate synthase (Yersinia pestis (strain Pestoides F)).